A 134-amino-acid chain; its full sequence is Arsenate reductase 2 (134 aa).

Active-site nucleophile residues include Cys-11, Cys-83, and Cys-90. Cystine bridges form between Cys-11–Cys-83 and Cys-83–Cys-90.

Belongs to the low molecular weight phosphotyrosine protein phosphatase family. Thioredoxin-coupled ArsC subfamily.

It is found in the cytoplasm. The catalysed reaction is arsenate + [thioredoxin]-dithiol + H(+) = arsenite + [thioredoxin]-disulfide + H2O. Catalyzes the reduction of arsenate [As(V)] to arsenite [As(III)]. This is Arsenate reductase 2 from Bacillus cereus (strain ATCC 10987 / NRS 248).